A 185-amino-acid chain; its full sequence is Lactoylglutathione lyase (185 aa).

A disordered region spans residues Met-1–Glu-21. Residues Ile-27–Leu-174 enclose the VOC domain. Substrate contacts are provided by Gln-30 and Arg-34. Residue Gln-30 participates in Zn(2+) binding. Glu-96 provides a ligand contact to Zn(2+). Residues Asn-100, Arg-120, His-124, and Lys-154–Met-155 contribute to the substrate site. His-124 lines the Zn(2+) pocket. Glu-170 is a Zn(2+) binding site. Glu-170 functions as the Proton donor/acceptor in the catalytic mechanism.

It belongs to the glyoxalase I family. Zn(2+) serves as cofactor.

It catalyses the reaction (R)-S-lactoylglutathione = methylglyoxal + glutathione. It participates in secondary metabolite metabolism; methylglyoxal degradation; (R)-lactate from methylglyoxal: step 1/2. Functionally, catalyzes the conversion of hemimercaptal, formed from methylglyoxal and glutathione, to S-lactoylglutathione. This chain is Lactoylglutathione lyase (GLY I), found in Brassica juncea (Indian mustard).